The sequence spans 365 residues: MTITGIIAEFNPFHNGHKYLLDQAEGLKIVAMSGNFMQRGEPAIVDKWTRAQMALENGADLVVELPFLVSVQAADFFGQGAVNILDRLGIDSLVFGTEEVRDYQKIADLYTEKGAEMEKFVENLPDSLSYPQKTQAMWKEFAGLDFSGNTPNHVLALAYAKAVAGRNIKLHPIQRQGAGYHSVNKDVDFASATALRQHQKDQDFLERFMPSVALFEQASKVIWEDYFPLLRYQILSNPDLTTIYQVNQEMAVRIKEAIKTAQSVEELVELVTTKRYTKARVRRLLTYILMQARENVLPEAIHVLGFTEKGRQHLKSLKGQVSLVSRIGKEPWDAMTQKADQIYQLGNPSIAEQNFGRVPIRIETN.

ATP contacts are provided by residues 7 to 20 (IAEF…HKYL), G96, N152, and R175.

The protein belongs to the TmcAL family.

Its subcellular location is the cytoplasm. The catalysed reaction is cytidine(34) in elongator tRNA(Met) + acetate + ATP = N(4)-acetylcytidine(34) in elongator tRNA(Met) + AMP + diphosphate. In terms of biological role, catalyzes the formation of N(4)-acetylcytidine (ac(4)C) at the wobble position of elongator tRNA(Met), using acetate and ATP as substrates. First activates an acetate ion to form acetyladenylate (Ac-AMP) and then transfers the acetyl group to tRNA to form ac(4)C34. The chain is tRNA(Met) cytidine acetate ligase from Streptococcus pneumoniae (strain JJA).